Consider the following 150-residue polypeptide: Ribosome maturation factor RimP (150 aa).

This sequence belongs to the RimP family.

It localises to the cytoplasm. In terms of biological role, required for maturation of 30S ribosomal subunits. This chain is Ribosome maturation factor RimP, found in Thermotoga neapolitana (strain ATCC 49049 / DSM 4359 / NBRC 107923 / NS-E).